The primary structure comprises 137 residues: Large ribosomal subunit protein uL16 (137 aa).

This sequence belongs to the universal ribosomal protein uL16 family. As to quaternary structure, part of the 50S ribosomal subunit.

Binds 23S rRNA and is also seen to make contacts with the A and possibly P site tRNAs. This is Large ribosomal subunit protein uL16 from Francisella tularensis subsp. holarctica (strain FTNF002-00 / FTA).